A 197-amino-acid polypeptide reads, in one-letter code: Probable low-affinity putrescine importer PlaP (197 aa).

5 consecutive transmembrane segments (helical) span residues 33–53 (GVLI…HAGV), 85–105 (VLLV…TATA), 107–127 (INLG…SQFW), 140–160 (FNYL…WINL), and 163–183 (SSMV…ACVT).

Belongs to the amino acid-polyamine-organocation (APC) superfamily.

It is found in the cell inner membrane. The enzyme catalyses putrescine(in) + H(+)(in) = putrescine(out) + H(+)(out). Its function is as follows. Putrescine importer. The chain is Probable low-affinity putrescine importer PlaP (plaP) from Klebsiella pneumoniae.